Reading from the N-terminus, the 228-residue chain is MSADVVVAIDGPAGTGKSSVSKGLARALGARYLDTGGMYRMVTLAVLRAGIDPADADAVGRAAQAVRMSVDYHPDGDRYFLGGEDVSTEIRGDKVTAAVSAVSSIPAVRTRLVGLQREMASGPGSIVVEGRDIGTVVLPDAPVKIFLTASAETRARRRNDQNVAAGLADDYEAVLAEVRRRDHLDSTRRVSPLRAAPDAVVVDTSDMTEAQVIDHLRDLVRQRSEVAR.

Residue 11-19 (GPAGTGKSS) participates in ATP binding.

The protein belongs to the cytidylate kinase family. Type 1 subfamily.

The protein localises to the cytoplasm. It catalyses the reaction CMP + ATP = CDP + ADP. The catalysed reaction is dCMP + ATP = dCDP + ADP. The chain is Cytidylate kinase from Mycobacterium avium (strain 104).